The sequence spans 128 residues: Gastrotropin (128 aa).

Position 2 is an N-acetylalanine (A2).

Belongs to the calycin superfamily. Fatty-acid binding protein (FABP) family.

Its subcellular location is the cytoplasm. It is found in the membrane. Its function is as follows. Binds to bile acids and is involved in enterohepatic bile acid metabolism. Required for efficient apical to basolateral transport of conjugated bile acids in ileal enterocytes. Stimulates gastric acid and pepsinogen secretion. The protein is Gastrotropin (FABP6) of Bos taurus (Bovine).